The following is a 313-amino-acid chain: Aspartate carbamoyltransferase catalytic subunit (313 aa).

Carbamoyl phosphate-binding residues include arginine 58 and threonine 59. Residue lysine 86 participates in L-aspartate binding. The carbamoyl phosphate site is built by arginine 108, histidine 136, and glutamine 139. L-aspartate is bound by residues arginine 169 and arginine 223. Residues glycine 264 and proline 265 each contribute to the carbamoyl phosphate site.

Belongs to the aspartate/ornithine carbamoyltransferase superfamily. ATCase family. Heterododecamer (2C3:3R2) of six catalytic PyrB chains organized as two trimers (C3), and six regulatory PyrI chains organized as three dimers (R2).

It carries out the reaction carbamoyl phosphate + L-aspartate = N-carbamoyl-L-aspartate + phosphate + H(+). Its pathway is pyrimidine metabolism; UMP biosynthesis via de novo pathway; (S)-dihydroorotate from bicarbonate: step 2/3. Functionally, catalyzes the condensation of carbamoyl phosphate and aspartate to form carbamoyl aspartate and inorganic phosphate, the committed step in the de novo pyrimidine nucleotide biosynthesis pathway. This chain is Aspartate carbamoyltransferase catalytic subunit, found in Chlorobium luteolum (strain DSM 273 / BCRC 81028 / 2530) (Pelodictyon luteolum).